The following is a 290-amino-acid chain: Nucleotide-binding protein Sde_3181 (290 aa).

8–15 (GRSGSGKT) contacts ATP. 60–63 (DARN) lines the GTP pocket.

Belongs to the RapZ-like family.

In terms of biological role, displays ATPase and GTPase activities. The polypeptide is Nucleotide-binding protein Sde_3181 (Saccharophagus degradans (strain 2-40 / ATCC 43961 / DSM 17024)).